The primary structure comprises 280 residues: Shikimate dehydrogenase (NADP(+)) (280 aa).

Residues 15–17 (SLS) and threonine 62 contribute to the shikimate site. Lysine 66 functions as the Proton acceptor in the catalytic mechanism. Residues asparagine 88 and aspartate 104 each contribute to the shikimate site. Residues 128 to 132 (GAGGA), 151 to 156 (NRTEGR), and isoleucine 222 contribute to the NADP(+) site. Residue tyrosine 224 coordinates shikimate. Glycine 245 is a binding site for NADP(+).

The protein belongs to the shikimate dehydrogenase family. As to quaternary structure, homodimer.

The enzyme catalyses shikimate + NADP(+) = 3-dehydroshikimate + NADPH + H(+). It functions in the pathway metabolic intermediate biosynthesis; chorismate biosynthesis; chorismate from D-erythrose 4-phosphate and phosphoenolpyruvate: step 4/7. In terms of biological role, involved in the biosynthesis of the chorismate, which leads to the biosynthesis of aromatic amino acids. Catalyzes the reversible NADPH linked reduction of 3-dehydroshikimate (DHSA) to yield shikimate (SA). The protein is Shikimate dehydrogenase (NADP(+)) of Methanosarcina barkeri (strain Fusaro / DSM 804).